The sequence spans 147 residues: Transcriptional repressor NrdR (147 aa).

Residues 3–34 (CPFCGHLETQVVETRVSEDADFVRRRRQCSAC) fold into a zinc finger. An ATP-cone domain is found at 49–139 (PVVVKKDGSR…VYRSFEDVDE (91 aa)).

It belongs to the NrdR family. It depends on Zn(2+) as a cofactor.

In terms of biological role, negatively regulates transcription of bacterial ribonucleotide reductase nrd genes and operons by binding to NrdR-boxes. The protein is Transcriptional repressor NrdR of Variovorax paradoxus (strain S110).